Here is a 223-residue protein sequence, read N- to C-terminus: UPF0502 protein Sbal_1765 (223 aa).

The protein belongs to the UPF0502 family.

This is UPF0502 protein Sbal_1765 from Shewanella baltica (strain OS155 / ATCC BAA-1091).